The sequence spans 746 residues: Exostosin-1 (746 aa).

The Cytoplasmic segment spans residues 1 to 7 (MQAKKRY). The helical; Signal-anchor for type II membrane protein transmembrane segment at 8 to 28 (FILLSAGSCLALLFYFGGLQF) threads the bilayer. Residues 29-746 (RASRSHSRRE…RKKYRDIERL (718 aa)) are Lumenal-facing. The N-linked (GlcNAc...) asparagine glycan is linked to Asn-89. 2 cysteine pairs are disulfide-bonded: Cys-98–Cys-103 and Cys-109–Cys-152. A protein-binding residues include Leu-166 and Tyr-203. UDP-binding residues include Lys-267, Lys-269, Tyr-271, and Arg-280. A disulfide bridge connects residues Cys-298 and Cys-312. His-300 lines the a protein pocket. 2 residues coordinate UDP: Tyr-319 and Tyr-324. Asn-330 carries an N-linked (GlcNAc...) asparagine glycan. Cystine bridges form between Cys-334–Cys-355 and Cys-652–Cys-704. Residues Arg-346 and Glu-349 each coordinate UDP.

It belongs to the glycosyltransferase 47 family. Part of the heparan sulfate polymerase, a dimeric complex composed of EXT1 and EXT2. Could also form homooligomeric complexes. Interacts with NDST1. N-glycosylated.

The protein resides in the golgi apparatus membrane. It localises to the golgi apparatus. It is found in the cis-Golgi network membrane. The protein localises to the endoplasmic reticulum membrane. It catalyses the reaction 3-O-{alpha-D-GlcNAc-[(1-&gt;4)-beta-D-GlcA-(1-&gt;4)-alpha-D-GlcNAc](n)-(1-&gt;4)-beta-D-GlcA-(1-&gt;3)-beta-D-Gal-(1-&gt;3)-beta-D-Gal-(1-&gt;4)-beta-D-Xyl}-L-seryl-[protein] + UDP-alpha-D-glucuronate = 3-O-{[(1-&gt;4)-beta-D-GlcA-(1-&gt;4)-alpha-D-GlcNAc](n+1)-(1-&gt;4)-beta-D-GlcA-(1-&gt;3)-beta-D-Gal-(1-&gt;3)-beta-D-Gal-(1-&gt;4)-beta-D-Xyl}-L-seryl-[protein] + UDP + H(+). It functions in the pathway protein modification; protein glycosylation. Glycosyltransferase forming with EXT2 the heterodimeric heparan sulfate polymerase which catalyzes the elongation of the heparan sulfate glycan backbone. Glycan backbone extension consists in the alternating transfer of (1-&gt;4)-beta-D-GlcA and (1-&gt;4)-alpha-D-GlcNAc residues from their respective UDP-sugar donors. Both EXT1 and EXT2 are required for the full activity of the polymerase since EXT1 bears the N-acetylglucosaminyl-proteoglycan 4-beta-glucuronosyltransferase activity within the complex while EXT2 carries the glucuronosyl-N-acetylglucosaminyl-proteoglycan 4-alpha-N-acetylglucosaminyltransferase activity. Heparan sulfate proteoglycans are ubiquitous components of the extracellular matrix and play an important role in tissue homeostasis and signaling. The polypeptide is Exostosin-1 (EXT1) (Papio anubis (Olive baboon)).